A 202-amino-acid chain; its full sequence is Protein FAR-RED ELONGATED HYPOCOTYL 1 (202 aa).

At serine 39 the chain carries Phosphoserine. The Nuclear localization sequence (NLS) signature appears at lysine 40–lysine 43. The short motif at leucine 54–leucine 57 is the Nuclear export sequence (NES) element. Residue threonine 61 is modified to Phosphothreonine.

It belongs to the FHY1 protein family. As to quaternary structure, homodimer and heterodimer with FHL. Interacts with underphosphorylated PHYA, especially upon far-red (FR) light illumination. Binds to LAF1 and HFR1. Forms PHYA/FHY1/HFR1 complex in darkness but dissociates from PHYA and HFR1 in response to continuous FR light (FRc). In terms of processing, inactivated by rapid reversible PHYA-mediated phosphorylation at Ser-39 and Thr-61 in red light (R), thus inhibiting PHYA signaling in a negative feedback loop; this ensures the seedling deetiolation process in response to a R-enriched light condition. Subsequent exposure to far-red light (FR) after the R conditions leads to dephosphorylation. The phosphorylated form is cytoplasmic only and unable to bind to chromatin at direct target genes whereas the unphosphorylated form can shuttle from cytoplasm to nucleus. In terms of tissue distribution, expressed in hypocotyl cells of etiolated plants.

Its subcellular location is the nucleus. It localises to the cytoplasm. Key regulator of far red / red (FR/R) spectrum-specific responses essential for the adaption to changing light conditions (e.g. de-etiolation), essentially by regulating PHYA shuttling from the cytoplasm to the nucleus and by directly regulating the expression of some target genes, depending on light conditions and phosphorylation status. Binds chromatin at target genes promoters, especially in FR light conditions. Can activate transcription of different genes, some being in a phytochrome A (PHYA)-dependent and other in a PHYA-independent manners. Controls specific aspects of plant development, such as the inhibition of seed germination under FR during salt stress. Essential for light-regulated PHYA nuclear accumulation and subsequent PHYA phototropic signaling processes involved in photomorphogenesis. Mediates the association of PHYA with HFR1 and LAF1 in the nucleus in response to FR conditions. PHYA-specific signal transducer in response to continuous FR lights. Contributes to inhibition of hypocotyl elongation in continuous blue light (B). In Arabidopsis thaliana (Mouse-ear cress), this protein is Protein FAR-RED ELONGATED HYPOCOTYL 1.